We begin with the raw amino-acid sequence, 505 residues long: DEAD-box ATP-dependent RNA helicase 41 (505 aa).

An HIT-type zinc finger spans residues 27–56 (GEPKCVICSRYGEYICDETNDDVCSLECKQ). The short motif at 110–138 (LTFTSCGLPPKLLLNLETAGYDFPTPIQM) is the Q motif element. One can recognise a Helicase ATP-binding domain in the interval 141-318 (IPAALTGKSL…GSLAKEIILV (178 aa)). 154-161 (ADTGSGKT) is an ATP binding site. Positions 267-270 (DEVD) match the DEAD box motif. In terms of domain architecture, Helicase C-terminal spans 342 to 492 (KKQKLFDILR…AIPKELINLT (151 aa)).

It belongs to the DEAD box helicase family. DDX59 subfamily.

The catalysed reaction is ATP + H2O = ADP + phosphate + H(+). The polypeptide is DEAD-box ATP-dependent RNA helicase 41 (RH41) (Arabidopsis thaliana (Mouse-ear cress)).